The following is a 144-amino-acid chain: Cytochrome c'' (144 aa).

Positions 1–20 (MKIKTIIAVFGVLFSAHALA) are cleaved as a signal peptide. Heme c contacts are provided by C69, C72, H73, and H115. C116 and C124 are oxidised to a cystine.

Monomer. Binds 1 heme c group covalently per subunit. The heme is low-spin in the oxidized state but switches to a high-spin form upon reduction, due to the dissociation of one of the axial histidines, His-115.

The polypeptide is Cytochrome c'' (cycA) (Methylophilus methylotrophus (Bacterium W3A1)).